The sequence spans 371 residues: Flagellar P-ring protein (371 aa).

An N-terminal signal peptide occupies residues 1-25 (MTMRVCKWLLTFALLFAATLTPAHS).

It belongs to the FlgI family. The basal body constitutes a major portion of the flagellar organelle and consists of four rings (L,P,S, and M) mounted on a central rod.

The protein resides in the periplasm. It is found in the bacterial flagellum basal body. In terms of biological role, assembles around the rod to form the L-ring and probably protects the motor/basal body from shearing forces during rotation. The sequence is that of Flagellar P-ring protein from Sinorhizobium fredii (strain NBRC 101917 / NGR234).